We begin with the raw amino-acid sequence, 361 residues long: UPF0283 membrane protein Smed_1530 (361 aa).

Residues 1–40 (MNDDSNGRRRRPAAFPVGTEDATSRELEQTPRRAPGSFSD) form a disordered region. Positions 22-31 (ATSRELEQTP) are enriched in basic and acidic residues. Transmembrane regions (helical) follow at residues 76–96 (FGKI…GLWV) and 109–129 (WLGY…LIVV).

It belongs to the UPF0283 family.

The protein localises to the cell inner membrane. The chain is UPF0283 membrane protein Smed_1530 from Sinorhizobium medicae (strain WSM419) (Ensifer medicae).